The chain runs to 439 residues: Glucose-1-phosphate adenylyltransferase (439 aa).

Alpha-D-glucose 1-phosphate-binding positions include glycine 172, 187 to 188 (EK), and serine 219.

The protein belongs to the bacterial/plant glucose-1-phosphate adenylyltransferase family. In terms of assembly, homotetramer.

The enzyme catalyses alpha-D-glucose 1-phosphate + ATP + H(+) = ADP-alpha-D-glucose + diphosphate. It functions in the pathway glycan biosynthesis; glycogen biosynthesis. Involved in the biosynthesis of ADP-glucose, a building block required for the elongation reactions to produce glycogen. Catalyzes the reaction between ATP and alpha-D-glucose 1-phosphate (G1P) to produce pyrophosphate and ADP-Glc. The protein is Glucose-1-phosphate adenylyltransferase of Synechocystis sp. (strain ATCC 27184 / PCC 6803 / Kazusa).